The sequence spans 254 residues: 3-deoxy-manno-octulosonate cytidylyltransferase (254 aa).

This sequence belongs to the KdsB family.

It localises to the cytoplasm. The enzyme catalyses 3-deoxy-alpha-D-manno-oct-2-ulosonate + CTP = CMP-3-deoxy-beta-D-manno-octulosonate + diphosphate. Its pathway is nucleotide-sugar biosynthesis; CMP-3-deoxy-D-manno-octulosonate biosynthesis; CMP-3-deoxy-D-manno-octulosonate from 3-deoxy-D-manno-octulosonate and CTP: step 1/1. The protein operates within bacterial outer membrane biogenesis; lipopolysaccharide biosynthesis. Functionally, activates KDO (a required 8-carbon sugar) for incorporation into bacterial lipopolysaccharide in Gram-negative bacteria. This is 3-deoxy-manno-octulosonate cytidylyltransferase from Pseudomonas aeruginosa (strain ATCC 15692 / DSM 22644 / CIP 104116 / JCM 14847 / LMG 12228 / 1C / PRS 101 / PAO1).